The following is a 172-amino-acid chain: Large ribosomal subunit protein uL10 (172 aa).

It belongs to the universal ribosomal protein uL10 family. Part of the ribosomal stalk of the 50S ribosomal subunit. The N-terminus interacts with L11 and the large rRNA to form the base of the stalk. The C-terminus forms an elongated spine to which L12 dimers bind in a sequential fashion forming a multimeric L10(L12)X complex.

Functionally, forms part of the ribosomal stalk, playing a central role in the interaction of the ribosome with GTP-bound translation factors. This Bradyrhizobium sp. (strain ORS 278) protein is Large ribosomal subunit protein uL10.